The chain runs to 173 residues: MPAPQKDGPRANRDIRGVREVQLIDETGQNRGVMGFFDALQVAEEAGLDLVEIAPNSTPPVCKLLDYGRYRFNEQKKQAEARKRQKTVEVKEIKLRPGIDKHDYDVKMKAVQRFFEEGDKVKVTLRFRGREMAHQDLGLRLLERVKAETQEIAKVESEPQLEGRQMIMILAPR.

Belongs to the IF-3 family. In terms of assembly, monomer.

The protein localises to the cytoplasm. IF-3 binds to the 30S ribosomal subunit and shifts the equilibrium between 70S ribosomes and their 50S and 30S subunits in favor of the free subunits, thus enhancing the availability of 30S subunits on which protein synthesis initiation begins. In Methylobacterium sp. (strain 4-46), this protein is Translation initiation factor IF-3.